A 310-amino-acid chain; its full sequence is Homoserine kinase (310 aa).

91 to 101 (PIGSGLGSSAC) contributes to the ATP binding site.

Belongs to the GHMP kinase family. Homoserine kinase subfamily.

It is found in the cytoplasm. The catalysed reaction is L-homoserine + ATP = O-phospho-L-homoserine + ADP + H(+). The protein operates within amino-acid biosynthesis; L-threonine biosynthesis; L-threonine from L-aspartate: step 4/5. Catalyzes the ATP-dependent phosphorylation of L-homoserine to L-homoserine phosphate. This is Homoserine kinase from Escherichia coli O81 (strain ED1a).